The primary structure comprises 227 residues: MNVAVILFGGKGERFSKDYPKQFVKFHGKTLMEHTVEKFLENFIHLIIIVVNGEYLEESKKILKKYKRKNIYVILGGKTREFSTLNAVKYLKDLISEDDNVIIHDGARPFVSKEVILRNIDFVNKYGAVVTAVPVENTIAFVENKIVKEIPPRRYLFTLQTPQTFKYSILYKSFRLIKDLEKFTDDSSVVLAAGYNVHVVYGEKTNIKITTKEDLYLIGVEKIEGNI.

The protein belongs to the IspD/TarI cytidylyltransferase family. IspD subfamily.

The catalysed reaction is 2-C-methyl-D-erythritol 4-phosphate + CTP + H(+) = 4-CDP-2-C-methyl-D-erythritol + diphosphate. The protein operates within isoprenoid biosynthesis; isopentenyl diphosphate biosynthesis via DXP pathway; isopentenyl diphosphate from 1-deoxy-D-xylulose 5-phosphate: step 2/6. In terms of biological role, catalyzes the formation of 4-diphosphocytidyl-2-C-methyl-D-erythritol from CTP and 2-C-methyl-D-erythritol 4-phosphate (MEP). The polypeptide is 2-C-methyl-D-erythritol 4-phosphate cytidylyltransferase (Thermosipho melanesiensis (strain DSM 12029 / CIP 104789 / BI429)).